The sequence spans 113 residues: Hydrogenase maturation factor HypA (113 aa).

Histidine 2 lines the Ni(2+) pocket. Cysteine 73, cysteine 76, cysteine 89, and cysteine 92 together coordinate Zn(2+).

It belongs to the HypA/HybF family.

Involved in the maturation of [NiFe] hydrogenases. Required for nickel insertion into the metal center of the hydrogenase. The chain is Hydrogenase maturation factor HypA from Moorella thermoacetica (strain ATCC 39073 / JCM 9320).